The chain runs to 122 residues: Small ribosomal subunit protein uS13 (122 aa).

Residues 99 to 122 (RGQRTHTNARTRKGPAKAIAGKKK) form a disordered region.

Belongs to the universal ribosomal protein uS13 family. In terms of assembly, part of the 30S ribosomal subunit. Forms a loose heterodimer with protein S19. Forms two bridges to the 50S subunit in the 70S ribosome.

Its function is as follows. Located at the top of the head of the 30S subunit, it contacts several helices of the 16S rRNA. In the 70S ribosome it contacts the 23S rRNA (bridge B1a) and protein L5 of the 50S subunit (bridge B1b), connecting the 2 subunits; these bridges are implicated in subunit movement. Contacts the tRNAs in the A and P-sites. The polypeptide is Small ribosomal subunit protein uS13 (Rhodopseudomonas palustris (strain BisA53)).